The following is a 481-amino-acid chain: 2-succinylbenzoate--CoA ligase (481 aa).

Belongs to the ATP-dependent AMP-binding enzyme family. MenE subfamily.

It carries out the reaction 2-succinylbenzoate + ATP + CoA = 2-succinylbenzoyl-CoA + AMP + diphosphate. The protein operates within quinol/quinone metabolism; 1,4-dihydroxy-2-naphthoate biosynthesis; 1,4-dihydroxy-2-naphthoate from chorismate: step 5/7. It participates in quinol/quinone metabolism; menaquinone biosynthesis. Its function is as follows. Converts 2-succinylbenzoate (OSB) to 2-succinylbenzoyl-CoA (OSB-CoA). The sequence is that of 2-succinylbenzoate--CoA ligase from Bacillus cereus (strain ATCC 10987 / NRS 248).